The primary structure comprises 197 residues: C-type lectin domain family 3 member A (197 aa).

A signal peptide spans 1–22 (MAKNGLVICILVITLLLDQTTS). 3 disulfide bridges follow: C68-C78, C95-C191, and C167-C183. A C-type lectin domain is found at 74–192 (VHKKCYLASE…CRSSKRYICE (119 aa)).

Restricted to cartilage and breast. Also expressed in breast cancers.

It is found in the secreted. Functionally, promotes cell adhesion to laminin-332 and fibronectin. This Homo sapiens (Human) protein is C-type lectin domain family 3 member A (CLEC3A).